Here is a 317-residue protein sequence, read N- to C-terminus: Ribosomal RNA small subunit methyltransferase H (317 aa).

S-adenosyl-L-methionine-binding positions include 37–39 (AGH), D56, F85, D106, and Q113.

This sequence belongs to the methyltransferase superfamily. RsmH family.

The protein localises to the cytoplasm. The enzyme catalyses cytidine(1402) in 16S rRNA + S-adenosyl-L-methionine = N(4)-methylcytidine(1402) in 16S rRNA + S-adenosyl-L-homocysteine + H(+). Functionally, specifically methylates the N4 position of cytidine in position 1402 (C1402) of 16S rRNA. This is Ribosomal RNA small subunit methyltransferase H from Lactococcus lactis subsp. lactis (strain IL1403) (Streptococcus lactis).